The sequence spans 127 residues: Small ribosomal subunit protein bS6 (127 aa).

Residues valine 96–alanine 127 form a disordered region. Residues aspartate 117–alanine 127 are compositionally biased toward basic and acidic residues.

It belongs to the bacterial ribosomal protein bS6 family.

Binds together with bS18 to 16S ribosomal RNA. This is Small ribosomal subunit protein bS6 from Azoarcus sp. (strain BH72).